A 310-amino-acid polypeptide reads, in one-letter code: Ceramide synthase LOH1 (310 aa).

The next 6 membrane-spanning stretches (helical) occupy residues 16-36 (SFPT…FPTI), 85-105 (CIYY…EPWF), 131-151 (FLYM…VFWE), 157-177 (FGVS…SYIC), 216-236 (FVLF…FWIL), and 260-280 (YMFN…WVLI). A TLC domain is found at 76–289 (RKFKESAWKC…IYRMLVKQVQ (214 aa)). Residues serine 300 and serine 302 each carry the phosphoserine modification.

Expressed ubiquitously at high levels. Not observed in pollen.

Its subcellular location is the endoplasmic reticulum membrane. It catalyses the reaction (4R)-hydroxysphinganine + a fatty acyl-CoA = an N-acyl-(4R)-4-hydroxysphinganine + CoA + H(+). The enzyme catalyses hexacosanoyl-CoA + (4R)-hydroxysphinganine = N-hexacosanoyl-(4R)-hydroxysphinganine + CoA + H(+). The catalysed reaction is tetracosanoyl-CoA + (4R)-hydroxysphinganine = N-tetracosanoyl-(4R)-hydroxysphinganine + CoA + H(+). It participates in sphingolipid metabolism. Its activity is regulated as follows. Inhibited by the mycotoxin fumonisin B(1), a sphingosine analog mycotoxins produced by pathogenic fungi. Repressed by divalent cation such as magnesium Mg(2+), copper Cu(2+), zinc Zn(2+), manganese Mn(2+), calcium Ca(2+) and cobalt Co(2+). In terms of biological role, essential for plant growth, promotes cell division in root meristems. Catalyzes the biosynthesis of ceramide sphingolipids with C(16) to C(28) fatty acids, structural membrane lipids involved in membrane trafficking (e.g. early endosomes) and cell polarity (e.g. polar auxin transport related proteins); mostly active with t18:0 and saturated very long saturated fatty acids (C24:0 and C26:0), such as long-chain base (LCB) phytosphingosine (t18:0), lignoceroyl- and hexacosanoyl-CoAs. Mediates resistance to sphinganine-analog mycotoxins (SAMs, e.g. fumonisin B(1)) by restoring the sphingolipid biosynthesis. Could salvage the transport of GPI-anchored proteins from the endoplasmic reticulum to the Golgi apparatus in ceramides-depleted cells after SAM exposure. May prevent precocious cell death by delaying PR1 accumulation during aging. Contributes to hypoxic conditions tolerance (e.g. submergences), especially in the dark, by promoting the formation of very-long-chain (VLC) ceramide species (22:1, 24:1 and 26:1) and of VLC unsaturated ceramides, which are modulating CTR1-mediated ethylene signaling leading to endoplasmic reticulum (ER)-to-nucleus translocation of EIN2 and EIN3. This Arabidopsis thaliana (Mouse-ear cress) protein is Ceramide synthase LOH1.